A 476-amino-acid chain; its full sequence is Transmembrane transporter FPSE_08127 (476 aa).

The helical transmembrane segment at 72–92 (ILAIPAALGALGSIGGSLCII) threads the bilayer. Asn-111 carries an N-linked (GlcNAc...) asparagine glycan. The next 9 helical transmembrane spans lie at 133 to 153 (LVGV…VVAI), 164 to 184 (GTCT…FSAI), 192 to 212 (WLTW…VVAV), 231 to 251 (WAPI…NIFI), 275 to 295 (ACLV…LVIY), 317 to 337 (VAYG…QHVA), 364 to 384 (LGIN…VPIL), 387 to 407 (LLGL…PALL), and 431 to 451 (LIMM…VVLI).

The protein belongs to the amino acid/polyamine transporter 2 family.

It localises to the membrane. Its function is as follows. Transmembrane transporter; part of the Fusarium detoxification of benzoxazolinone cluster involved in the degradation of benzoxazolinones produced by the host plant. Maize, wheat, and rye produce the 2 benzoxazinone phytoanticipins 2,4-dihy-droxy-7-methoxy-1,4-benzoxazin-3-one (DIMBOA) and 2,4-dihydroxy-1,4-benzoxazin-3-one (DIBOA) that, due to their inherent instability once released, spontaneously degrade to the more stable corresponding benzoxazolinones, 6-methoxy-2-benzoxazolinone (MBOA) and 2-benzoxazolinone (BOA), respectively. FPSE_08127 is proposed to shuttle metabolites of benzoxazolinone degradation. This is Transmembrane transporter FPSE_08127 from Fusarium pseudograminearum (strain CS3096) (Wheat and barley crown-rot fungus).